The following is a 142-amino-acid chain: Large ribosomal subunit protein uL16 (142 aa).

The span at Met1–Arg14 shows a compositional bias: basic residues. Residues Met1–Thr22 are disordered.

It belongs to the universal ribosomal protein uL16 family. Part of the 50S ribosomal subunit.

Functionally, binds 23S rRNA and is also seen to make contacts with the A and possibly P site tRNAs. This chain is Large ribosomal subunit protein uL16, found in Synechococcus elongatus (strain ATCC 33912 / PCC 7942 / FACHB-805) (Anacystis nidulans R2).